Here is a 273-residue protein sequence, read N- to C-terminus: NADPH-dependent 7-cyano-7-deazaguanine reductase (273 aa).

81-83 (VES) lines the substrate pocket. 83–84 (SK) is a binding site for NADPH. C179 acts as the Thioimide intermediate in catalysis. The active-site Proton donor is D186. 218 to 219 (AE) is a substrate binding site. 247-248 (RG) is a binding site for NADPH.

It belongs to the GTP cyclohydrolase I family. QueF type 2 subfamily. Homodimer.

The protein localises to the cytoplasm. It catalyses the reaction 7-aminomethyl-7-carbaguanine + 2 NADP(+) = 7-cyano-7-deazaguanine + 2 NADPH + 3 H(+). It functions in the pathway tRNA modification; tRNA-queuosine biosynthesis. Catalyzes the NADPH-dependent reduction of 7-cyano-7-deazaguanine (preQ0) to 7-aminomethyl-7-deazaguanine (preQ1). This is NADPH-dependent 7-cyano-7-deazaguanine reductase from Rickettsia bellii (strain OSU 85-389).